We begin with the raw amino-acid sequence, 428 residues long: Endoplasmic reticulum junction formation protein lunapark (428 aa).

A lipid anchor (N-myristoyl glycine) is attached at glycine 2. Topologically, residues 2 to 45 (GGLFSRWRTKLSTVEVLESIDKEIQALEEFREKNQRLQKLRVGR) are cytoplasmic. Residues 16–43 (EVLESIDKEIQALEEFREKNQRLQKLRV) are a coiled coil. Residues 46 to 66 (LILYSSVLYLFTCLIVYLWYL) form a helical membrane-spanning segment. Residues 67–77 (PDEFTARLAMT) lie on the Lumenal side of the membrane. The chain crosses the membrane as a helical span at residues 78 to 98 (LPFFAFPLIIWSIRTVIIFFF). The Cytoplasmic portion of the chain corresponds to 99–428 (SKRTERNNEA…ELNGESLTAE (330 aa)). The stretch at 102 to 128 (TERNNEALDDLKSQRKKILEEVMEKET) forms a coiled coil. A phosphoserine mark is found at serine 114, serine 153, serine 177, serine 182, and serine 194. The segment at 143 to 248 (SKKAKECEPP…PPGPPLARPI (106 aa)) is disordered. Residues 185-198 (QGPPPQVPVSPGPP) show a composition bias toward pro residues. Residues threonine 211 and threonine 213 each carry the phosphothreonine modification. A phosphoserine mark is found at serine 217 and serine 227. A C4-type; plays a role in ER morphology zinc finger spans residues 276–301 (CQQCFSHNGMALKEEFEYIAFRCAYC). Residues serine 321, serine 353, and serine 384 each carry the phosphoserine modification. A disordered region spans residues 361–428 (NNTEQTDDKI…ELNGESLTAE (68 aa)). Over residues 386–401 (SEEPEEKQETENEEAS) the composition is skewed to acidic residues. Serine 414 carries the phosphoserine modification.

The protein belongs to the lunapark family. In terms of assembly, homodimer; homodimerization requires the C4-type zinc finger motif and decreases during mitosis in a phosphorylation-dependent manner. Myristoylated; myristoylation is necessary for the endoplasmic reticulum (ER) three-way ER tubular junction formation, but is not required neither for membrane translocation, membrane topology formation, nor for the specific localization to ER membranes. Post-translationally, phosphorylated. Phosphorylation occurs at Ser-177, Ser-182, Ser-217, Ser-227, Ser-321 and Ser-384 during interphase. Phosphorylation occurs at Ser-114, Ser-153, Ser-194, Thr-211 and Ser-353 during mitosis; these phosphorylations reduce both its homodimerization and the ER three-way tubular junction formation. In terms of processing, subject to proteasomal degradation following phosphorylation during mitosis.

The protein localises to the endoplasmic reticulum membrane. In terms of biological role, endoplasmic reticulum (ER)-shaping membrane protein that plays a role in determining ER morphology. Involved in the stabilization of nascent three-way ER tubular junctions within the ER network. May also play a role as a curvature-stabilizing protein within three-way ER tubular junction network. May be involved in limb and central nervous system development. This chain is Endoplasmic reticulum junction formation protein lunapark, found in Pongo abelii (Sumatran orangutan).